Here is a 37-residue protein sequence, read N- to C-terminus: Large ribosomal subunit protein bL36 (37 aa).

This sequence belongs to the bacterial ribosomal protein bL36 family.

The sequence is that of Large ribosomal subunit protein bL36 from Koribacter versatilis (strain Ellin345).